Consider the following 610-residue polypeptide: ESX-5 secretion system protein EccA5 (610 aa).

357-364 is a binding site for ATP; it reads GPPGTGKT.

This sequence belongs to the CbxX/CfxQ family. In terms of assembly, part of the ESX-5 / type VII secretion system (T7SS), which is composed of cytosolic and membrane components.

Its subcellular location is the cytoplasm. Its function is as follows. Part of the ESX-5 specialized secretion system, which is responsible for the secretion of EsxN and a number of PE_PGRS and PPE proteins. EccA5 exhibits ATPase activity and may provide energy for the export of ESX-5 substrates. The polypeptide is ESX-5 secretion system protein EccA5 (Mycobacterium marinum (strain ATCC BAA-535 / M)).